The chain runs to 338 residues: MLGRCFPPNTKEKQQLRMIKLCDPAESELSPFLITLTLAVLLAEYLTGIIANGFITAIHAAECVQNKSVSTSGRILVFLSVSRIALQSLMMLEITISSTSLSFYSEDTVYYAFKISFIFLNFCSLWFAAWLSFFYFVKIANFSYPLFLKLRWRISGLIPWLLWLSVFISFSHSMFCINICTGYCDNSFPIHSSNSTEKTYFSEISVVSLAFFFNLGIVIPLIMFILAAILLILSLKRHTLYMXSNATGSKDPSMEAHIGAIKATSYFLILYIFNAVALFIYLSNMFDINSLWNTLCQIIMAAYPASHSILLIKDNPGLRRAWKQLQHRLHLYPKEWTL.

Residues 1 to 30 (MLGRCFPPNTKEKQQLRMIKLCDPAESELS) are Extracellular-facing. The helical transmembrane segment at 31-51 (PFLITLTLAVLLAEYLTGIIA) threads the bilayer. The Cytoplasmic portion of the chain corresponds to 52–74 (NGFITAIHAAECVQNKSVSTSGR). A helical transmembrane segment spans residues 75–95 (ILVFLSVSRIALQSLMMLEIT). At 96 to 116 (ISSTSLSFYSEDTVYYAFKIS) the chain is on the extracellular side. A helical membrane pass occupies residues 117–137 (FIFLNFCSLWFAAWLSFFYFV). Over 138 to 156 (KIANFSYPLFLKLRWRISG) the chain is Cytoplasmic. A helical transmembrane segment spans residues 157–177 (LIPWLLWLSVFISFSHSMFCI). Residues 178-205 (NICTGYCDNSFPIHSSNSTEKTYFSEIS) lie on the Extracellular side of the membrane. An N-linked (GlcNAc...) asparagine glycan is attached at N194. Residues 206 to 226 (VVSLAFFFNLGIVIPLIMFIL) form a helical membrane-spanning segment. At 227-262 (AAILLILSLKRHTLYMXSNATGSKDPSMEAHIGAIK) the chain is on the cytoplasmic side. The helical transmembrane segment at 263–283 (ATSYFLILYIFNAVALFIYLS) threads the bilayer. Topologically, residues 284–291 (NMFDINSL) are extracellular. Residues 292–312 (WNTLCQIIMAAYPASHSILLI) traverse the membrane as a helical segment. The Cytoplasmic segment spans residues 313-338 (KDNPGLRRAWKQLQHRLHLYPKEWTL).

This sequence belongs to the G-protein coupled receptor T2R family.

The protein localises to the membrane. In terms of biological role, receptor that may play a role in the perception of bitterness and is gustducin-linked. May play a role in sensing the chemical composition of the gastrointestinal content. The activity of this receptor may stimulate alpha gustducin, mediate PLC-beta-2 activation and lead to the gating of TRPM5. This Papio hamadryas (Hamadryas baboon) protein is Taste receptor type 2 member 39 (TAS2R39).